The primary structure comprises 652 residues: Regulator of DNA class I crossover intermediates 1 (652 aa).

The segment at residues 1-231 (MNWVGGSRSR…TLFERLNSLG (231 aa)) is a DNA-binding region (binds DNA containing a D-loop). Disordered regions lie at residues 363–434 (NKTS…NIPS) and 469–506 (KISL…EDQI). The span at 377–388 (YQREYNKNERND) shows a compositional bias: basic and acidic residues. Positions 389–401 (LSTSFENDYYPSS) are enriched in polar residues. Residues 402–417 (SERKEKFENDYQEKTP) are compositionally biased toward basic and acidic residues. Over residues 473–498 (DSAQSSRSTSYSPRPTDSCFSSSSDL) the composition is skewed to low complexity.

Interacts with MSH5. Interacts with TEX11.

Its subcellular location is the chromosome. Functionally, involved in recombination, probably acting by stabilizing recombination intermediates during meiotic crossover formation. Required for normal germline development and fertility. Required for meiotic progression, complete chromosomal synapsis and crossover formation. Binds double-stranded DNA. However, also binds branched DNA molecules, such as those containing a D-loop or Holliday junction structure. Probably not required for formation of DNA double-strand breaks (DSBs). Also binds RNA in an RNA structure-independent manner, with a preference for binding 3'-UTR regions of mRNAs; may stabilize bound RNAs. In Homo sapiens (Human), this protein is Regulator of DNA class I crossover intermediates 1.